The following is a 329-amino-acid chain: Beta-ketoacyl-[acyl-carrier-protein] synthase III (329 aa).

Active-site residues include cysteine 112 and histidine 253. Residues 254-258 form an ACP-binding region; it reads QANQR. Asparagine 283 is a catalytic residue.

Belongs to the thiolase-like superfamily. FabH family. As to quaternary structure, homodimer.

Its subcellular location is the cytoplasm. The catalysed reaction is malonyl-[ACP] + acetyl-CoA + H(+) = 3-oxobutanoyl-[ACP] + CO2 + CoA. It functions in the pathway lipid metabolism; fatty acid biosynthesis. Catalyzes the condensation reaction of fatty acid synthesis by the addition to an acyl acceptor of two carbons from malonyl-ACP. Catalyzes the first condensation reaction which initiates fatty acid synthesis and may therefore play a role in governing the total rate of fatty acid production. Possesses both acetoacetyl-ACP synthase and acetyl transacylase activities. Its substrate specificity determines the biosynthesis of branched-chain and/or straight-chain of fatty acids. This chain is Beta-ketoacyl-[acyl-carrier-protein] synthase III, found in Gloeobacter violaceus (strain ATCC 29082 / PCC 7421).